A 434-amino-acid polypeptide reads, in one-letter code: D-amino acid dehydrogenase (434 aa).

Residue 3-17 participates in FAD binding; the sequence is VLVLGSGVIGTTSAW.

The protein belongs to the DadA oxidoreductase family. Requires FAD as cofactor.

The enzyme catalyses a D-alpha-amino acid + A + H2O = a 2-oxocarboxylate + AH2 + NH4(+). It participates in amino-acid degradation; D-alanine degradation; NH(3) and pyruvate from D-alanine: step 1/1. Oxidative deamination of D-amino acids. This chain is D-amino acid dehydrogenase, found in Stenotrophomonas maltophilia (strain K279a).